Consider the following 417-residue polypeptide: Gamma-glutamyl phosphate reductase (417 aa).

It belongs to the gamma-glutamyl phosphate reductase family.

It localises to the cytoplasm. The catalysed reaction is L-glutamate 5-semialdehyde + phosphate + NADP(+) = L-glutamyl 5-phosphate + NADPH + H(+). It participates in amino-acid biosynthesis; L-proline biosynthesis; L-glutamate 5-semialdehyde from L-glutamate: step 2/2. In terms of biological role, catalyzes the NADPH-dependent reduction of L-glutamate 5-phosphate into L-glutamate 5-semialdehyde and phosphate. The product spontaneously undergoes cyclization to form 1-pyrroline-5-carboxylate. This is Gamma-glutamyl phosphate reductase from Legionella pneumophila (strain Paris).